The primary structure comprises 188 residues: UPF0301 protein XOO1309 (188 aa).

The protein belongs to the UPF0301 (AlgH) family.

The polypeptide is UPF0301 protein XOO1309 (Xanthomonas oryzae pv. oryzae (strain MAFF 311018)).